Here is a 437-residue protein sequence, read N- to C-terminus: MKWLHLLSVVACVADEVYAFPSHLHGAVGHLTASRLSSVVDEAVRSAHEKRLLFDAGNEPIDVTGKHEFIPPNFEKGDQRGPCPGLNALANHGYIKRNGVTNLVETIGAINKVYGMGIDLATILTTMGVVFVGNPLSLNPGFSIGSTPKGNDNILGNLVGLLGKPRGLVGSHNIIEGDSSNTRADLYVTGDASTMAMDQFESFYDMASDEGTYDFDTFAERAKIRFHETIETNPDFYYGPFTGMIVRNAGYFFACRMLSNHTKGSHEDIMDQATLRSFFAVQKEGDKLTYKRGWERIPTNWYRRSVDYGLIDVNLDVISLITKYPELGSIGGNMGEVNSYAGVDISDITGGVLNLTKLLEGNNLLCFVFEVVKTVSPNSLSGLFSIVVPPLKLITDALGTALLDLSCPALKDLQVGGESFSKGIQKKFPGAKINASL.

The signal sequence occupies residues 1–19; sequence MKWLHLLSVVACVADEVYA. Position 83 (Cys-83) interacts with heme.

Belongs to the chloroperoxidase family. Requires heme b as cofactor.

It functions in the pathway secondary metabolite biosynthesis. Aromatic peroxidase; part of the fragmented gene cluster that mediates the biosynthesis of fusarochromene, a tryptophan-derived metabolite closely related to a group of mycotoxins including fusarochromanone. The role of fscJ within the pathway has not been identified yet. The first step of the pathway is the epimerization of L-tryptophan to D-tryptophan in the presence of the NRPS-like tryptophan epimerase fscC. D-tryptophan is subsequently hydroxylated by the tryptophan 6-hydroxylase fscE to yield 6-hydroxytryptophan. The pyrrole ring undergoes cleavaged by the tryptophan 2,3-dioxygenase fscD and is finally converted to 4-hydroxykyrunenine by the hydrolase fscH. The NRPS-like oxidoreductase fscA reduces the carboxyl group to primary alcohol and the DMATS-type prenyltransferase fscG performs prenylation, followed by the formation of a chromene ring catalyzed by the oxidoreductase fscI, which leads to desacetylfusarochromene. Epoxidation by fscF and rearrangement reactions of chromene double bonds convert compound desacetylfusarochromene to fusarochromanones. Although specific acetyltransferases were not found near the fsc gene cluster, several predicted enzymes containing the N-acetyltransferase superfamily domain are present in the genome of F.equiseti. These predicted enzymes may have the potential to convert desacetylfusarochromene to fusarochromene. This is Aromatic peroxidase fscJ from Fusarium equiseti (Fusarium scirpi).